The following is a 123-amino-acid chain: Fluoride-specific ion channel FluC (123 aa).

4 helical membrane passes run 6–26 (VALV…LSGV), 38–58 (LLVN…IFWG), 68–88 (FLGT…YETF), and 100–120 (LLNI…GFVL). 2 residues coordinate Na(+): glycine 75 and serine 78.

It belongs to the fluoride channel Fluc/FEX (TC 1.A.43) family.

The protein localises to the cell membrane. The enzyme catalyses fluoride(in) = fluoride(out). Na(+) is not transported, but it plays an essential structural role and its presence is essential for fluoride channel function. In terms of biological role, fluoride-specific ion channel. Important for reducing fluoride concentration in the cell, thus reducing its toxicity. This is Fluoride-specific ion channel FluC from Pyrococcus furiosus (strain ATCC 43587 / DSM 3638 / JCM 8422 / Vc1).